A 39-amino-acid chain; its full sequence is Photosystem II reaction center protein L (39 aa).

A helical membrane pass occupies residues 18 to 38 (SLYLGLLLIAVLGILFSSYFF).

This sequence belongs to the PsbL family. As to quaternary structure, PSII is composed of 1 copy each of membrane proteins PsbA, PsbB, PsbC, PsbD, PsbE, PsbF, PsbH, PsbI, PsbJ, PsbK, PsbL, PsbM, PsbT, PsbX, PsbY, PsbZ, Psb30/Ycf12, peripheral proteins PsbO, CyanoQ (PsbQ), PsbU, PsbV and a large number of cofactors. It forms dimeric complexes.

Its subcellular location is the cellular thylakoid membrane. One of the components of the core complex of photosystem II (PSII). PSII is a light-driven water:plastoquinone oxidoreductase that uses light energy to abstract electrons from H(2)O, generating O(2) and a proton gradient subsequently used for ATP formation. It consists of a core antenna complex that captures photons, and an electron transfer chain that converts photonic excitation into a charge separation. This subunit is found at the monomer-monomer interface and is required for correct PSII assembly and/or dimerization. This Picosynechococcus sp. (strain ATCC 27264 / PCC 7002 / PR-6) (Agmenellum quadruplicatum) protein is Photosystem II reaction center protein L.